Reading from the N-terminus, the 130-residue chain is Large ribosomal subunit protein bL17 (130 aa).

The protein belongs to the bacterial ribosomal protein bL17 family. As to quaternary structure, part of the 50S ribosomal subunit. Contacts protein L32.

This is Large ribosomal subunit protein bL17 from Nitrosomonas europaea (strain ATCC 19718 / CIP 103999 / KCTC 2705 / NBRC 14298).